The primary structure comprises 226 residues: N-(5'-phosphoribosyl)anthranilate isomerase (226 aa).

This sequence belongs to the TrpF family.

The catalysed reaction is N-(5-phospho-beta-D-ribosyl)anthranilate = 1-(2-carboxyphenylamino)-1-deoxy-D-ribulose 5-phosphate. Its pathway is amino-acid biosynthesis; L-tryptophan biosynthesis; L-tryptophan from chorismate: step 3/5. The protein is N-(5'-phosphoribosyl)anthranilate isomerase (TRP1) of Candida albicans (strain SC5314 / ATCC MYA-2876) (Yeast).